Here is a 638-residue protein sequence, read N- to C-terminus: DNA mismatch repair protein MutL (638 aa).

Residues 398–435 are disordered; sequence GREGTSFGTQTNAFGSMATPRDNSRGSYSAGESRQRTE.

This sequence belongs to the DNA mismatch repair MutL/HexB family.

Its function is as follows. This protein is involved in the repair of mismatches in DNA. It is required for dam-dependent methyl-directed DNA mismatch repair. May act as a 'molecular matchmaker', a protein that promotes the formation of a stable complex between two or more DNA-binding proteins in an ATP-dependent manner without itself being part of a final effector complex. In Shewanella baltica (strain OS155 / ATCC BAA-1091), this protein is DNA mismatch repair protein MutL.